Reading from the N-terminus, the 1130-residue chain is MHC class II transactivator (1130 aa).

The interval 94-132 (AYANIAELDQYVFQDSQLEGLSKDIFKHIGPDEVIGESM) is required for acetyltransferase activity. Positions 269–303 (PSGFTVHGLPTSPDRPGSTSPFAPSATDLPSMPEP) are disordered. Residues 414–724 (RVIAVLGKAG…CFLGALWLAL (311 aa)) form the NACHT domain. Residue 420–427 (GKAGQGKS) coordinates GTP. 4 LRR repeats span residues 985 to 1008 (SLQH…SQLS), 1016 to 1037 (SLET…KLAE), 1045 to 1066 (SLLR…SLAR), and 1073 to 1093 (SLRV…QQLA).

Interacts with ZXDA and ZXDC. Interacts with PML (isoform PML-2). Interacts with TAF7; interaction inhibits CIITA acetyltransferase activity, thereby repressing transcription. Post-translationally, autophosphorylated, affecting interaction with TAF7.

Its subcellular location is the nucleus. It is found in the PML body. It catalyses the reaction L-seryl-[protein] + ATP = O-phospho-L-seryl-[protein] + ADP + H(+). The catalysed reaction is L-threonyl-[protein] + ATP = O-phospho-L-threonyl-[protein] + ADP + H(+). Essential for transcriptional activity of the HLA class II promoter; activation is via the proximal promoter. Does not bind DNA. May act in a coactivator-like fashion through protein-protein interactions by contacting factors binding to the proximal MHC class II promoter, to elements of the transcription machinery, or both PubMed:8402893, PubMed:7749984,. Alternatively it may activate HLA class II transcription by modifying proteins that bind to the MHC class II promoter. Also mediates enhanced MHC class I transcription; the promoter element requirements for CIITA-mediated transcription are distinct from those of constitutive MHC class I transcription, and CIITA can functionally replace TAF1 at these genes. Activates CD74 transcription. Exhibits intrinsic GTP-stimulated acetyltransferase activity. Exhibits serine/threonine protein kinase activity: can phosphorylate the TFIID component TAF7, the RAP74 subunit of the general transcription factor TFIIF, histone H2B at 'Ser-37' and other histones (in vitro). Has antiviral activity against Ebola virus and coronaviruses, including SARS-CoV-2. Induces resistance by up-regulation of the p41 isoform of CD74, which blocks cathepsin-mediated cleavage of viral glycoproteins, thereby preventing viral fusion. In terms of biological role, exhibits dominant-negative suppression of MHC class II gene expression. The chain is MHC class II transactivator from Homo sapiens (Human).